A 315-amino-acid polypeptide reads, in one-letter code: MATTVAATKLTSLKAVKKLGFREIRQVRQWTPLQSSMPHFGSRQSFATSTVVKAQATAVEQSTGEAVPKVESPVVVVTGASRGIGKAIALSLGKAGCKVLVNYARSAKEAEEVSKQIEAYGGQAITFGGDVSKEADVEAMMKTAIDAWGTIDVVVNNAGITRDTLLIRMKKSQWDEVIDLNLTGVFLCTQAATKIMMKKRKGRIINIASVVGLIGNIGQANYAAAKAGVIGFSKTAAREGASRNINVNVVCPGFIASDMTAKLGEDMEKKILGTIPLGRYGQPEDVAGLVEFLALSPAASYITGQAFTIDGGIAI.

The N-terminal 55 residues, 1–55 (MATTVAATKLTSLKAVKKLGFREIRQVRQWTPLQSSMPHFGSRQSFATSTVVKAQ), are a transit peptide targeting the chloroplast. 77-101 (VTGASRGIGKAIALSLGKAGCKVLV) serves as a coordination point for NADP(+). Ser-209 is a binding site for substrate. Tyr-222 serves as the catalytic Proton acceptor.

This sequence belongs to the short-chain dehydrogenases/reductases (SDR) family. As to quaternary structure, homotetramer.

It is found in the plastid. The protein resides in the chloroplast. The catalysed reaction is a (3R)-hydroxyacyl-[ACP] + NADP(+) = a 3-oxoacyl-[ACP] + NADPH + H(+). It functions in the pathway lipid metabolism; fatty acid biosynthesis. In Brassica napus (Rape), this protein is 3-oxoacyl-[acyl-carrier-protein] reductase 3, chloroplastic (bkr3).